Here is an 89-residue protein sequence, read N- to C-terminus: MALTQERKREIIEQFKVHENDTGSPEVQIAILTEQINNLNEHLRVHKKDHHSRRGLLKMVGKRRRLLAYLRNKDVARYREIVEKLGLRR.

This sequence belongs to the universal ribosomal protein uS15 family. In terms of assembly, part of the 30S ribosomal subunit. Forms a bridge to the 50S subunit in the 70S ribosome, contacting the 23S rRNA.

One of the primary rRNA binding proteins, it binds directly to 16S rRNA where it helps nucleate assembly of the platform of the 30S subunit by binding and bridging several RNA helices of the 16S rRNA. Its function is as follows. Forms an intersubunit bridge (bridge B4) with the 23S rRNA of the 50S subunit in the ribosome. The sequence is that of Small ribosomal subunit protein uS15 from Geobacillus stearothermophilus (Bacillus stearothermophilus).